Here is a 590-residue protein sequence, read N- to C-terminus: CTP synthase (590 aa).

Residues 1–278 (MRKHPQSATK…DAFVVRRLNL (278 aa)) are amidoligase domain. CTP is bound at residue S20. S20 contacts UTP. Residues 21 to 26 (SLGKGL) and D78 contribute to the ATP site. The Mg(2+) site is built by D78 and E152. CTP is bound by residues 159 to 161 (DIE), 199 to 204 (KTKPTQ), and K235. Residues 199 to 204 (KTKPTQ) and K235 contribute to the UTP site. The 249-residue stretch at 303 to 551 (RIALVGKYVD…VGAAIDYKSA (249 aa)) folds into the Glutamine amidotransferase type-1 domain. G366 serves as a coordination point for L-glutamine. C393 functions as the Nucleophile; for glutamine hydrolysis in the catalytic mechanism. Residues 394–397 (LGLQ), E416, and R477 contribute to the L-glutamine site. Active-site residues include H524 and E526. A disordered region spans residues 566–590 (EHLPNSSNQHRDGVERSFPAPAARG).

The protein belongs to the CTP synthase family. Homotetramer.

It carries out the reaction UTP + L-glutamine + ATP + H2O = CTP + L-glutamate + ADP + phosphate + 2 H(+). The enzyme catalyses L-glutamine + H2O = L-glutamate + NH4(+). It catalyses the reaction UTP + NH4(+) + ATP = CTP + ADP + phosphate + 2 H(+). It functions in the pathway pyrimidine metabolism; CTP biosynthesis via de novo pathway; CTP from UDP: step 2/2. With respect to regulation, allosterically activated by GTP, when glutamine is the substrate; GTP has no effect on the reaction when ammonia is the substrate. The allosteric effector GTP functions by stabilizing the protein conformation that binds the tetrahedral intermediate(s) formed during glutamine hydrolysis. Inhibited by the product CTP, via allosteric rather than competitive inhibition. In terms of biological role, catalyzes the ATP-dependent amination of UTP to CTP with either L-glutamine or ammonia as the source of nitrogen. Regulates intracellular CTP levels through interactions with the four ribonucleotide triphosphates. This chain is CTP synthase, found in Mycobacterium leprae (strain Br4923).